A 306-amino-acid polypeptide reads, in one-letter code: Pantothenate kinase (306 aa).

90–97 serves as a coordination point for ATP; it reads GSVAVGKS.

It belongs to the prokaryotic pantothenate kinase family.

The protein resides in the cytoplasm. The catalysed reaction is (R)-pantothenate + ATP = (R)-4'-phosphopantothenate + ADP + H(+). Its pathway is cofactor biosynthesis; coenzyme A biosynthesis; CoA from (R)-pantothenate: step 1/5. This Listeria monocytogenes serotype 4b (strain CLIP80459) protein is Pantothenate kinase.